The sequence spans 376 residues: Tetraacyldisaccharide 4'-kinase (376 aa).

51-58 (AVGGTGKT) lines the ATP pocket.

The protein belongs to the LpxK family.

It carries out the reaction a lipid A disaccharide + ATP = a lipid IVA + ADP + H(+). The protein operates within glycolipid biosynthesis; lipid IV(A) biosynthesis; lipid IV(A) from (3R)-3-hydroxytetradecanoyl-[acyl-carrier-protein] and UDP-N-acetyl-alpha-D-glucosamine: step 6/6. In terms of biological role, transfers the gamma-phosphate of ATP to the 4'-position of a tetraacyldisaccharide 1-phosphate intermediate (termed DS-1-P) to form tetraacyldisaccharide 1,4'-bis-phosphate (lipid IVA). This Bacteroides fragilis (strain ATCC 25285 / DSM 2151 / CCUG 4856 / JCM 11019 / LMG 10263 / NCTC 9343 / Onslow / VPI 2553 / EN-2) protein is Tetraacyldisaccharide 4'-kinase.